Here is a 119-residue protein sequence, read N- to C-terminus: Holo-[acyl-carrier-protein] synthase (119 aa).

Mg(2+)-binding residues include Asp8 and Glu59.

The protein belongs to the P-Pant transferase superfamily. AcpS family. Mg(2+) serves as cofactor.

The protein localises to the cytoplasm. It carries out the reaction apo-[ACP] + CoA = holo-[ACP] + adenosine 3',5'-bisphosphate + H(+). In terms of biological role, transfers the 4'-phosphopantetheine moiety from coenzyme A to a Ser of acyl-carrier-protein. This chain is Holo-[acyl-carrier-protein] synthase, found in Staphylococcus aureus (strain USA300).